Reading from the N-terminus, the 107-residue chain is uncharacterized protein (107 aa).

Residues 52–72 (LIIHDLFIYIFILNFFFFPFC) traverse the membrane as a helical segment.

It localises to the membrane. This is an uncharacterized protein from Saccharomyces cerevisiae (strain ATCC 204508 / S288c) (Baker's yeast).